We begin with the raw amino-acid sequence, 676 residues long: Transketolase 7 (676 aa).

H36 lines the substrate pocket. Thiamine diphosphate contacts are provided by residues H76 and 125-127 (GPL). Mg(2+) is bound at residue D166. The thiamine diphosphate site is built by G167 and N196. Mg(2+) contacts are provided by N196 and I198. Residues H273, R367, and S394 each coordinate substrate. H273 lines the thiamine diphosphate pocket. Thiamine diphosphate is bound by residues E421 and F448. Catalysis depends on E421, which acts as the Proton donor. Substrate-binding residues include H472, D480, and R531.

This sequence belongs to the transketolase family. In terms of assembly, homodimer. Requires Mg(2+) as cofactor. Ca(2+) serves as cofactor. Mn(2+) is required as a cofactor. It depends on Co(2+) as a cofactor. The cofactor is thiamine diphosphate. In terms of tissue distribution, leaves and roots.

The enzyme catalyses D-sedoheptulose 7-phosphate + D-glyceraldehyde 3-phosphate = aldehydo-D-ribose 5-phosphate + D-xylulose 5-phosphate. In terms of biological role, could be involved in the conversion of sugars, which are a major phenomenon in the rehydration process. Catalyzes the transfer of a two-carbon ketol group from a ketose donor to an aldose acceptor, via a covalent intermediate with the cofactor thiamine pyrophosphate. The polypeptide is Transketolase 7 (TKT7) (Craterostigma plantagineum (Blue gem)).